The sequence spans 188 residues: Large ribosomal subunit protein bL32m (188 aa).

4 residues coordinate Zn(2+): Cys-110, Cys-113, Cys-123, and Cys-126. A disordered region spans residues 162–188 (GETPSEHDQGKRIIERERKRPSWFTQN). Positions 165–181 (PSEHDQGKRIIERERKR) are enriched in basic and acidic residues.

This sequence belongs to the bacterial ribosomal protein bL32 family. In terms of assembly, component of the mitochondrial ribosome large subunit (39S) which comprises a 16S rRNA and about 50 distinct proteins. In terms of processing, MRPL32 precursor is processed by the m-AAA protease (composed of AFG3L2 and SPG7), which cleaves the N-terminal transit peptide. Cleavage by the m-AAA protease takes place prior to assembly into the large subunit, an essential step for mitochondrial ribosome (mitoribosome) assembly. Proper processing by the m-AAA protease is dependent on the zinc-binding region within the tightly folded C-terminal domain of MRPL32: zinc-dependent folding halts degradation initiated from the N-terminus and triggers the release of mature MRPL32.

The protein localises to the mitochondrion. Its function is as follows. Component of the mitochondrial large ribosomal subunit (mt-LSU). The mitochondrial ribosome (mitoribosome) is a large ribonucleoprotein complex responsible for the synthesis of proteins inside mitochondria. This chain is Large ribosomal subunit protein bL32m (MRPL32), found in Bos taurus (Bovine).